The chain runs to 1375 residues: BNI1-related protein 1 (1375 aa).

The 397-residue stretch at 94 to 490 (CMPQDASLVE…YLIDSFQVST (397 aa)) folds into the GBD/FH3 domain. Positions 520-601 (QSDEIARRAV…ITTHQRLYDQ (82 aa)) form a coiled coil. S621 carries the post-translational modification Phosphoserine. The region spanning 659 to 851 (SSYLTDANNE…LVTPPAPPLP (193 aa)) is the FH1 domain. The disordered stretch occupies residues 661–684 (YLTDANNENESQNESEDKSKDSLF). The residue at position 751 (S751) is a Phosphoserine. Disordered regions lie at residues 764–785 (KLPQ…QSLL), 817–839 (AVPP…GPSN), and 1285–1309 (KSLL…GEKV). Composition is skewed to pro residues over residues 767-781 (QLPP…PPLP) and 818-828 (VPPPPPPPPLP). The FH2 domain maps to 868–1290 (DLKPPPTEKR…YEQRKSLLDM (423 aa)). One can recognise a DAD domain in the interval 1302 to 1336 (DENDGEKVNRDAVDLLISKLREVKKDPEPLRRRKS).

Belongs to the formin homology family. BNI1 subfamily. As to quaternary structure, interacts with profilin at the FH1 domain.

In terms of biological role, may organize microtubules by mediating spindle positioning and movement in the budding process. Potential target of the RHO family members. The sequence is that of BNI1-related protein 1 (BNR1) from Saccharomyces cerevisiae (strain ATCC 204508 / S288c) (Baker's yeast).